We begin with the raw amino-acid sequence, 334 residues long: ADP-L-glycero-D-manno-heptose-6-epimerase (334 aa).

NADP(+)-binding positions include 11–12 (FI), 32–33 (DN), lysine 39, lysine 54, 77–81 (QGACS), and asparagine 94. The active-site Proton acceptor is tyrosine 141. An NADP(+)-binding site is contributed by lysine 145. Asparagine 171 serves as a coordination point for substrate. Residues valine 172 and lysine 180 each contribute to the NADP(+) site. Lysine 180 acts as the Proton acceptor in catalysis. Residues arginine 182, histidine 189, 203 to 206 (FGSN), arginine 216, and tyrosine 295 contribute to the substrate site.

This sequence belongs to the NAD(P)-dependent epimerase/dehydratase family. HldD subfamily. As to quaternary structure, homopentamer. The cofactor is NADP(+).

It catalyses the reaction ADP-D-glycero-beta-D-manno-heptose = ADP-L-glycero-beta-D-manno-heptose. The protein operates within nucleotide-sugar biosynthesis; ADP-L-glycero-beta-D-manno-heptose biosynthesis; ADP-L-glycero-beta-D-manno-heptose from D-glycero-beta-D-manno-heptose 7-phosphate: step 4/4. Catalyzes the interconversion between ADP-D-glycero-beta-D-manno-heptose and ADP-L-glycero-beta-D-manno-heptose via an epimerization at carbon 6 of the heptose. This chain is ADP-L-glycero-D-manno-heptose-6-epimerase, found in Neisseria gonorrhoeae (strain ATCC 700825 / FA 1090).